A 380-amino-acid polypeptide reads, in one-letter code: Probable inactive dehydrogenase easA (380 aa).

FMN contacts are provided by residues 25 to 27 (PMT), Ala60, Gln102, and His171. The substrate site is built by His171 and Asn174. FMN is bound by residues Lys223, Gly299, 324 to 325 (GR), and Arg325. Tyr352 provides a ligand contact to substrate.

The protein belongs to the NADH:flavin oxidoreductase/NADH oxidase family.

Functionally, probable inactive dehydrogenase; part of the gene cluster that mediates the biosynthesis of fungal ergot alkaloid. DmaW catalyzes the first step of ergot alkaloid biosynthesis by condensing dimethylallyl diphosphate (DMAP) and tryptophan to form 4-dimethylallyl-L-tryptophan. The second step is catalyzed by the methyltransferase easF that methylates 4-dimethylallyl-L-tryptophan in the presence of S-adenosyl-L-methionine, resulting in the formation of 4-dimethylallyl-L-abrine. The catalase easC and the FAD-dependent oxidoreductase easE then transform 4-dimethylallyl-L-abrine to chanoclavine-I which is further oxidized by easD in the presence of NAD(+), resulting in the formation of chanoclavine-I aldehyde. Agroclavine dehydrogenase easG then mediates the conversion of chanoclavine-I aldehyde to agroclavine via a non-enzymatic adduct reaction: the substrate is an iminium intermediate that is formed spontaneously from chanoclavine-I aldehyde in the presence of glutathione. The presence of easA is not required to complete this reaction. Further conversion of agroclavine to paspalic acid is a two-step process involving oxidation of agroclavine to elymoclavine and of elymoclavine to paspalic acid, the second step being performed by the elymoclavine oxidase cloA. Paspalic acid is then further converted to D-lysergic acid. Ergopeptines are assembled from D-lysergic acid and three different amino acids by the D-lysergyl-peptide-synthetases composed each of a monomudular and a trimodular nonribosomal peptide synthetase subunit. LpsB and lpsC encode the monomodular subunits responsible for D-lysergic acid activation and incorporation into the ergopeptine backbone. LpsA1 and A2 subunits encode the trimodular nonribosomal peptide synthetase assembling the tripeptide portion of ergopeptines. LpsA1 is responsible for formation of the major ergopeptine, ergotamine, and lpsA2 for alpha-ergocryptine, the minor ergopeptine of the total alkaloid mixture elaborated by C.purpurea. D-lysergyl-tripeptides are assembled by the nonribosomal peptide synthetases and released as N-(D-lysergyl-aminoacyl)-lactams. Cyclolization of the D-lysergyl-tripeptides is performed by the Fe(2+)/2-ketoglutarate-dependent dioxygenase easH which introduces a hydroxyl group into N-(D-lysergyl-aminoacyl)-lactam at alpha-C of the aminoacyl residue followed by spontaneous condensation with the terminal lactam carbonyl group. The protein is Probable inactive dehydrogenase easA of Claviceps purpurea (strain 20.1) (Ergot fungus).